We begin with the raw amino-acid sequence, 125 residues long: MLARPSRLTRRPDYVACYNTGRRYFSKHFIVFALEREGAAPVWRYGLAVSRKVGDAVRRNRTKRVLREFFRLYQDDMPGGMDLVVVPKRRLDPRRVTLDLAVQELLPLMREIRDSLCREANDGTP.

It belongs to the RnpA family. Consists of a catalytic RNA component (M1 or rnpB) and a protein subunit.

The enzyme catalyses Endonucleolytic cleavage of RNA, removing 5'-extranucleotides from tRNA precursor.. Functionally, RNaseP catalyzes the removal of the 5'-leader sequence from pre-tRNA to produce the mature 5'-terminus. It can also cleave other RNA substrates such as 4.5S RNA. The protein component plays an auxiliary but essential role in vivo by binding to the 5'-leader sequence and broadening the substrate specificity of the ribozyme. In Oleidesulfovibrio alaskensis (strain ATCC BAA-1058 / DSM 17464 / G20) (Desulfovibrio alaskensis), this protein is Ribonuclease P protein component.